Reading from the N-terminus, the 211-residue chain is Uracil phosphoribosyltransferase (211 aa).

5-phospho-alpha-D-ribose 1-diphosphate-binding positions include R78, R103, and 130 to 138 (DPMLATGGT). Uracil contacts are provided by residues I195 and 200–202 (GDA). Residue D201 participates in 5-phospho-alpha-D-ribose 1-diphosphate binding.

This sequence belongs to the UPRTase family. The cofactor is Mg(2+).

The catalysed reaction is UMP + diphosphate = 5-phospho-alpha-D-ribose 1-diphosphate + uracil. The protein operates within pyrimidine metabolism; UMP biosynthesis via salvage pathway; UMP from uracil: step 1/1. Its activity is regulated as follows. Allosterically activated by GTP. In terms of biological role, catalyzes the conversion of uracil and 5-phospho-alpha-D-ribose 1-diphosphate (PRPP) to UMP and diphosphate. The protein is Uracil phosphoribosyltransferase of Paenarthrobacter aurescens (strain TC1).